The chain runs to 265 residues: Hydroxyethylthiazole kinase 1 (265 aa).

Residue methionine 39 coordinates substrate. The ATP site is built by lysine 115 and threonine 168. Glycine 195 is a binding site for substrate.

This sequence belongs to the Thz kinase family. Mg(2+) serves as cofactor.

It catalyses the reaction 5-(2-hydroxyethyl)-4-methylthiazole + ATP = 4-methyl-5-(2-phosphooxyethyl)-thiazole + ADP + H(+). It participates in cofactor biosynthesis; thiamine diphosphate biosynthesis; 4-methyl-5-(2-phosphoethyl)-thiazole from 5-(2-hydroxyethyl)-4-methylthiazole: step 1/1. In terms of biological role, catalyzes the phosphorylation of the hydroxyl group of 4-methyl-5-beta-hydroxyethylthiazole (THZ). The sequence is that of Hydroxyethylthiazole kinase 1 from Clostridium botulinum (strain Loch Maree / Type A3).